Reading from the N-terminus, the 161-residue chain is Disulfide bond formation protein B (161 aa).

Over 1–8 (MQANSRTY) the chain is Cytoplasmic. Residues 9 to 25 (FLLIAIVSFAMVGAALY) form a helical membrane-spanning segment. The Periplasmic portion of the chain corresponds to 26–43 (MQYAENLQPCPLCIMQRF). Cysteines 35 and 38 form a disulfide. A helical transmembrane segment spans residues 44-58 (AFIGIGIFSLLAVIA). The Cytoplasmic portion of the chain corresponds to 59–63 (QNTRT). The helical transmembrane segment at 64 to 81 (LWQGLGMLSGVGGIAVAG) threads the bilayer. Topologically, residues 82-136 (YQVALLMNPKASCGIDPLENWVNSLPTAKLLPQVFYSDGLCTAPTPPILGLSIPA) are periplasmic. The cysteines at positions 94 and 122 are disulfide-linked. The helical transmembrane segment at 137 to 155 (WSLIWLLILTLTLAVGLIR) threads the bilayer. Topologically, residues 156–161 (REKHFR) are cytoplasmic.

Belongs to the DsbB family.

Its subcellular location is the cell inner membrane. Functionally, required for disulfide bond formation in some periplasmic proteins. Acts by oxidizing the DsbA protein. In Cupriavidus metallidurans (strain ATCC 43123 / DSM 2839 / NBRC 102507 / CH34) (Ralstonia metallidurans), this protein is Disulfide bond formation protein B.